A 680-amino-acid chain; its full sequence is Harmonin-binding protein USHBP1 (680 aa).

The span at 1 to 15 (MSARATRPRSRRGRH) shows a compositional bias: basic residues. 2 disordered regions span residues 1–51 (MSAR…YLGP) and 134–161 (KSVE…PGQQ). Positions 179 to 218 (NREDELACTQASLQDAQAEKETLQRQVQELEDSLMQMEAS) form a coiled coil. Disordered stretches follow at residues 220 to 247 (PTPI…VPQD) and 384 to 405 (TMEV…PTPE). Coiled coils occupy residues 363–386 (TKGD…ATME) and 467–506 (QIQQ…LRAQ). Residues 524-549 (FAGDGSSGGSSEDPSSEEEAGEDRQQ) are disordered. A coiled-coil region spans residues 573-662 (QELSASLARA…QAEELAVLTA (90 aa)).

This sequence belongs to the MCC family. As to quaternary structure, interacts via its C-terminus with the first PDZ domain of USH1C.

The polypeptide is Harmonin-binding protein USHBP1 (Mus musculus (Mouse)).